The chain runs to 215 residues: Guanylate kinase (215 aa).

The Guanylate kinase-like domain occupies 6 to 185 (GAILVLSGPS…SEKLLLSIAR (180 aa)). An ATP-binding site is contributed by 13–20 (GPSGSGKS).

It belongs to the guanylate kinase family.

Its subcellular location is the cytoplasm. It carries out the reaction GMP + ATP = GDP + ADP. Its function is as follows. Essential for recycling GMP and indirectly, cGMP. The sequence is that of Guanylate kinase from Wolinella succinogenes (strain ATCC 29543 / DSM 1740 / CCUG 13145 / JCM 31913 / LMG 7466 / NCTC 11488 / FDC 602W) (Vibrio succinogenes).